Here is a 428-residue protein sequence, read N- to C-terminus: 3-phosphoshikimate 1-carboxyvinyltransferase (428 aa).

Positions 22, 23, and 27 each coordinate 3-phosphoshikimate. Lys22 serves as a coordination point for phosphoenolpyruvate. Residues Gly96 and Arg124 each contribute to the phosphoenolpyruvate site. 3-phosphoshikimate is bound by residues Ser170, Ser171, Gln172, Ser198, Asp314, Asn337, and Lys341. Gln172 is a phosphoenolpyruvate binding site. Residue Asp314 is the Proton acceptor of the active site. Phosphoenolpyruvate is bound by residues Arg345, Arg387, and Lys412.

The protein belongs to the EPSP synthase family. In terms of assembly, monomer.

The protein localises to the cytoplasm. It catalyses the reaction 3-phosphoshikimate + phosphoenolpyruvate = 5-O-(1-carboxyvinyl)-3-phosphoshikimate + phosphate. It functions in the pathway metabolic intermediate biosynthesis; chorismate biosynthesis; chorismate from D-erythrose 4-phosphate and phosphoenolpyruvate: step 6/7. Functionally, catalyzes the transfer of the enolpyruvyl moiety of phosphoenolpyruvate (PEP) to the 5-hydroxyl of shikimate-3-phosphate (S3P) to produce enolpyruvyl shikimate-3-phosphate and inorganic phosphate. The sequence is that of 3-phosphoshikimate 1-carboxyvinyltransferase from Shewanella denitrificans (strain OS217 / ATCC BAA-1090 / DSM 15013).